The sequence spans 538 residues: Neutral protease B (538 aa).

Residues 1–28 (MRNLTKTSLLLAGLCTAAQMVFVTHASA) form the signal peptide. A propeptide spans 29 to 223 (EESIEYDHTY…VIESFNAIHE (195 aa)) (activation peptide). A Ca(2+)-binding site is contributed by D365. H369 contacts Zn(2+). E370 is an active-site residue. Residues H373 and E393 each contribute to the Zn(2+) site. Residues D404, D406, D407, E409, E412, Y415, T416, I419, and D422 each contribute to the Ca(2+) site. Positions 421–441 (GDSLRSLEDPSKQGNPDHYSN) are disordered. Residue H453 is the Proton donor of the active site.

The protein belongs to the peptidase M4 family. It depends on Zn(2+) as a cofactor.

The protein localises to the secreted. Protease activity can be inhibited in vitro by either a zinc specific chelator, 1,10-phenanthroline, or a metal chelator, EDTA. The enzyme is resistant to phenylmethylsulfonyl fluoride and iodoacetic acid. Its function is as follows. Protease able to cleave casein in vitro. This Bacillus subtilis (strain 168) protein is Neutral protease B.